The following is a 496-amino-acid chain: Tyrosine-protein kinase Srms (496 aa).

One can recognise an SH3 domain in the interval 55–116 (PRARLFRALY…PVTYLAKATP (62 aa)). Residues 124 to 216 (WYFSGISRAQ…LIQNPLLQPC (93 aa)) form the SH2 domain. Positions 234-495 (FVLRRKLGEG…AINRRLHLGL (262 aa)) constitute a Protein kinase domain. Residues 240–248 (LGEGFFGEV) and K262 contribute to the ATP site. Residue D354 is the Proton acceptor of the active site. Residue Y384 is modified to Phosphotyrosine; by autocatalysis.

It belongs to the protein kinase superfamily. Tyr protein kinase family. SRC subfamily. Interacts (via the SH2 and SH3 domains) with DOK1. Interacts with KHDRBS1/SAM68 and VIM. As to expression, higher expression in liver, lung, thymus and skin than in brain, kidney, heart and spleen. In skin, highly expressed in keratinocytes. Abundant in lung, liver, spleen, kidney and testis and is also detected in the cerebrum.

The protein localises to the cytoplasm. It carries out the reaction L-tyrosyl-[protein] + ATP = O-phospho-L-tyrosyl-[protein] + ADP + H(+). Non-receptor tyrosine-protein kinase which phosphorylates DOK1 on tyrosine residues. Also phosphorylates KHDRBS1/SAM68 and VIM on tyrosine residues. Phosphorylation of KHDRBS1 is EGF-dependent. Phosphorylates OTUB1, promoting deubiquitination of RPTOR. The chain is Tyrosine-protein kinase Srms (Srms) from Mus musculus (Mouse).